A 572-amino-acid polypeptide reads, in one-letter code: Formate--tetrahydrofolate ligase (572 aa).

81 to 88 lines the ATP pocket; sequence TPAGEGKT.

This sequence belongs to the formate--tetrahydrofolate ligase family.

It carries out the reaction (6S)-5,6,7,8-tetrahydrofolate + formate + ATP = (6R)-10-formyltetrahydrofolate + ADP + phosphate. Its pathway is one-carbon metabolism; tetrahydrofolate interconversion. This Granulibacter bethesdensis (strain ATCC BAA-1260 / CGDNIH1) protein is Formate--tetrahydrofolate ligase.